The following is a 239-amino-acid chain: Ribosomal RNA small subunit methyltransferase G (239 aa).

S-adenosyl-L-methionine-binding positions include G78, F83, 129 to 130 (AE), and R148.

This sequence belongs to the methyltransferase superfamily. RNA methyltransferase RsmG family.

Its subcellular location is the cytoplasm. Its function is as follows. Specifically methylates the N7 position of a guanine in 16S rRNA. This chain is Ribosomal RNA small subunit methyltransferase G, found in Clostridium botulinum (strain ATCC 19397 / Type A).